Here is a 658-residue protein sequence, read N- to C-terminus: A-type ATP synthase subunit I (658 aa).

The next 7 membrane-spanning stretches (helical) occupy residues 383–403 (MAFV…YGII), 427–447 (IIMM…NGFI), 475–495 (ILIM…ILGA), 507–526 (ALGS…LYLV), 530–552 (IFGA…LFGL), 568–588 (LLAL…LTGL), and 591–611 (EMIP…GHIA).

The protein belongs to the V-ATPase 116 kDa subunit family. Has multiple subunits with at least A(3), B(3), C, D, E, F, H, I and proteolipid K(x).

Its subcellular location is the cell membrane. In terms of biological role, component of the A-type ATP synthase that produces ATP from ADP in the presence of a proton gradient across the membrane. The sequence is that of A-type ATP synthase subunit I from Methanothermobacter thermautotrophicus (strain ATCC 29096 / DSM 1053 / JCM 10044 / NBRC 100330 / Delta H) (Methanobacterium thermoautotrophicum).